A 99-amino-acid chain; its full sequence is CLAVATA3/ESR (CLE)-related protein 11 (99 aa).

A signal peptide spans M1–T31. Hydroxyproline occurs at positions 91 and 94. O-linked (Ara...) hydroxyproline glycosylation is present at P94.

It belongs to the CLV3/ESR signal peptide family. In terms of processing, the O-glycosylation (arabinosylation) of the hydroxyproline Pro-94 enhances binding affinity of the CLE11p peptide for its receptor. Mostly expressed in seedlings, roots and siliques, and, to a lower extent, in leaves, flowers, stems and apex.

The protein resides in the secreted. The protein localises to the extracellular space. Extracellular signal peptide that regulates cell fate. Represses root apical meristem maintenance. Regulates the transition of protophloem cells from proliferation to differentiation, thus impinging on postembryonic growth capacity of the root meristem; this signaling pathway requires CRN and CLV2. This chain is CLAVATA3/ESR (CLE)-related protein 11, found in Arabidopsis thaliana (Mouse-ear cress).